A 400-amino-acid polypeptide reads, in one-letter code: Argininosuccinate synthase (400 aa).

Residues 6-14 and alanine 33 each bind ATP; that span reads AYSGGLDTS. L-citrulline is bound by residues tyrosine 84 and serine 89. Residue glycine 114 participates in ATP binding. Residues threonine 116, asparagine 120, and aspartate 121 each coordinate L-aspartate. Residue asparagine 120 participates in L-citrulline binding. L-citrulline-binding residues include arginine 124, serine 173, serine 182, glutamate 258, and tyrosine 270.

Belongs to the argininosuccinate synthase family. Type 1 subfamily. As to quaternary structure, homotetramer.

It is found in the cytoplasm. It catalyses the reaction L-citrulline + L-aspartate + ATP = 2-(N(omega)-L-arginino)succinate + AMP + diphosphate + H(+). The protein operates within amino-acid biosynthesis; L-arginine biosynthesis; L-arginine from L-ornithine and carbamoyl phosphate: step 2/3. The chain is Argininosuccinate synthase from Thermus thermophilus (strain ATCC BAA-163 / DSM 7039 / HB27).